The chain runs to 180 residues: ATP synthase subunit delta (180 aa).

This sequence belongs to the ATPase delta chain family. As to quaternary structure, F-type ATPases have 2 components, F(1) - the catalytic core - and F(0) - the membrane proton channel. F(1) has five subunits: alpha(3), beta(3), gamma(1), delta(1), epsilon(1). F(0) has three main subunits: a(1), b(2) and c(10-14). The alpha and beta chains form an alternating ring which encloses part of the gamma chain. F(1) is attached to F(0) by a central stalk formed by the gamma and epsilon chains, while a peripheral stalk is formed by the delta and b chains.

The protein resides in the cell membrane. F(1)F(0) ATP synthase produces ATP from ADP in the presence of a proton or sodium gradient. F-type ATPases consist of two structural domains, F(1) containing the extramembraneous catalytic core and F(0) containing the membrane proton channel, linked together by a central stalk and a peripheral stalk. During catalysis, ATP synthesis in the catalytic domain of F(1) is coupled via a rotary mechanism of the central stalk subunits to proton translocation. Its function is as follows. This protein is part of the stalk that links CF(0) to CF(1). It either transmits conformational changes from CF(0) to CF(1) or is implicated in proton conduction. This chain is ATP synthase subunit delta, found in Ligilactobacillus salivarius (strain UCC118) (Lactobacillus salivarius).